The primary structure comprises 368 residues: Phosphoserine aminotransferase (368 aa).

Arginine 42 is an L-glutamate binding site. Residues tryptophan 101, threonine 151, aspartate 175, and glutamine 198 each contribute to the pyridoxal 5'-phosphate site. At lysine 199 the chain carries N6-(pyridoxal phosphate)lysine. Residue 240-241 (NT) participates in pyridoxal 5'-phosphate binding.

The protein belongs to the class-V pyridoxal-phosphate-dependent aminotransferase family. SerC subfamily. In terms of assembly, homodimer. The cofactor is pyridoxal 5'-phosphate.

Its subcellular location is the cytoplasm. The enzyme catalyses O-phospho-L-serine + 2-oxoglutarate = 3-phosphooxypyruvate + L-glutamate. It catalyses the reaction 4-(phosphooxy)-L-threonine + 2-oxoglutarate = (R)-3-hydroxy-2-oxo-4-phosphooxybutanoate + L-glutamate. It functions in the pathway amino-acid biosynthesis; L-serine biosynthesis; L-serine from 3-phospho-D-glycerate: step 2/3. It participates in cofactor biosynthesis; pyridoxine 5'-phosphate biosynthesis; pyridoxine 5'-phosphate from D-erythrose 4-phosphate: step 3/5. Its function is as follows. Catalyzes the reversible conversion of 3-phosphohydroxypyruvate to phosphoserine and of 3-hydroxy-2-oxo-4-phosphonooxybutanoate to phosphohydroxythreonine. This Polaromonas sp. (strain JS666 / ATCC BAA-500) protein is Phosphoserine aminotransferase.